The following is a 299-amino-acid chain: Regucalcin (299 aa).

Position 18 (E18) interacts with a divalent metal cation. Substrate is bound by residues R101, N103, and E121. Residues N154 and D204 each contribute to the a divalent metal cation site. D204 functions as the Proton donor/acceptor in the catalytic mechanism.

The protein belongs to the SMP-30/CGR1 family. Zn(2+) serves as cofactor. Requires Mn(2+) as cofactor. The cofactor is Ca(2+). It depends on Mg(2+) as a cofactor.

Its subcellular location is the cytoplasm. The catalysed reaction is D-glucono-1,5-lactone + H2O = D-gluconate + H(+). It participates in cofactor biosynthesis; L-ascorbate biosynthesis via UDP-alpha-D-glucuronate pathway; L-ascorbate from UDP-alpha-D-glucuronate: step 3/4. In terms of biological role, gluconolactonase with low activity towards other sugar lactones, including gulonolactone and galactonolactone. Catalyzes a key step in ascorbic acid (vitamin C) biosynthesis. Can also hydrolyze diisopropyl phosphorofluoridate and phenylacetate (in vitro). Calcium-binding protein. Modulates Ca(2+) signaling, and Ca(2+)-dependent cellular processes and enzyme activities. This is Regucalcin from Gallus gallus (Chicken).